The sequence spans 81 residues: Omega-conotoxin-like TxMKLT1-0223 (81 aa).

An N-terminal signal peptide occupies residues 1-22; the sequence is MKLTCMMIVAVLFLTAWTFVTA. Residues 23 to 52 constitute a propeptide that is removed on maturation; sequence VPHSSNALENLYLKARHEMENPEASKLNTR. Disulfide bonds link cysteine 55–cysteine 72, cysteine 62–cysteine 76, and cysteine 71–cysteine 80.

The protein belongs to the conotoxin O1 superfamily. Expressed by the venom duct.

It localises to the secreted. Functionally, omega-conotoxins act at presynaptic membranes, they bind and block voltage-gated calcium channels (Cav). This chain is Omega-conotoxin-like TxMKLT1-0223, found in Conus textile (Cloth-of-gold cone).